The primary structure comprises 716 residues: ATP-dependent DNA helicase DinG (716 aa).

The interval 1 to 114 (MALTAALKAQ…PDLKFTAAFG (114 aa)) is HD1 domain N-terminus. The Helicase ATP-binding domain maps to 17–294 (ALQEQIPDFI…TCMEQFRPKT (278 aa)). 4 residues coordinate ATP: isoleucine 26, glutamine 31, lysine 60, and threonine 61. Residues 115–216 (RGRYVCPRNL…FFVARREIQE (102 aa)) are [4Fe-4S] domain. Residues cysteine 120, cysteine 194, cysteine 199, and cysteine 205 each coordinate [4Fe-4S] cluster. The segment at 217–261 (AEVVVANHALVMAAMESEAVLPDPKNLLLVLDEGHHLPDVARDAL) is HD1 domain middle. The DEAH box signature appears at 248-251 (DEGH). The segment at 262 to 438 (EMSAEITAPW…LHLWFHCVGI (177 aa)) is arch domain. An HD1 domain middle region spans residues 439-491 (RVSDQLERLLWRSIPHIIVTSATLRSLNSFSRLQEMSGLKEKAGDRFVALDSP). Residues 492–716 (FNHCEQGKIV…KTKSPRRRRR (225 aa)) form an HD2 domain region. Positions 599, 656, and 659 each coordinate ATP.

Belongs to the helicase family. DinG subfamily. Type 1 sub-subfamily. In terms of assembly, monomer in solution. [4Fe-4S] cluster serves as cofactor. It depends on Mg(2+) as a cofactor.

The enzyme catalyses Couples ATP hydrolysis with the unwinding of duplex DNA at the replication fork by translocating in the 5'-3' direction. This creates two antiparallel DNA single strands (ssDNA). The leading ssDNA polymer is the template for DNA polymerase III holoenzyme which synthesizes a continuous strand.. The catalysed reaction is ATP + H2O = ADP + phosphate + H(+). ATPase activity is 15-fold stimulated by single-stranded DNA (ssDNA). Reduction of the [4Fe-4S] cluster reversibly switches off helicase activity. Remains fully active after exposure to 100-fold excess of hydrogen peroxide, but the [4Fe-4S] cluster can be efficiently modified by nitric oxide (NO), forming the DinG-bound dinitrosyl iron complex with the concomitant inactivation of helicase activity. Helicase activity on G-quadruplex DNA is inhibited by porphyrin derivatives meso-tetra (N-methyl-4-pyridyl) porphine tetra tosylate (T4) and N-methyl mesoporphyrin IX (NMM). Helicase activity on forked duplexes is not inhibited by T4 or NMM. G-quadruplex ligands such as Pyridostatin, PhenDC3, BRACO-19 and Netropsin can alter recognition and unwinding of G-quadruplex DNAs; the effect is both ligand- and G-quadruplex DNA-specific. In terms of biological role, DNA-dependent ATPase and 5'-3' DNA helicase. Can also unwind DNA:RNA hybrid duplexes. Is active on D-loops, R-loops, and on forked structures. Unwinds G-quadruplex DNA in a 5'-3' direction; unwinding efficiency differs on different substrates. Does not appear to unwind replication forks or Holliday junctions. Translocates on single-stranded (ss)DNA with a 5'-3' polarity. In vitro at high concentrations also unwinds in a 3'-5' direction. May be involved in recombinational DNA repair and the resumption of replication after DNA damage. The [4Fe-4S] cluster is redox active at cellular potentials and is involved in DNA-mediated charge-transport signaling between DNA repair proteins from distinct pathways. DinG cooperates at long-range with endonuclease III, a base excision repair enzyme, using DNA charge transport to redistribute to regions of DNA damage. Binds 10-11 nucleotides of ssDNA in a positively-charged groove across the helicase domains. This chain is ATP-dependent DNA helicase DinG, found in Escherichia coli (strain K12).